The primary structure comprises 85 residues: ATP synthase subunit c (85 aa).

The next 2 membrane-spanning stretches (helical) occupy residues 10–30 (IAVA…FAIL) and 53–73 (FIVA…ALFF).

It belongs to the ATPase C chain family. F-type ATPases have 2 components, F(1) - the catalytic core - and F(0) - the membrane proton channel. F(1) has five subunits: alpha(3), beta(3), gamma(1), delta(1), epsilon(1). F(0) has three main subunits: a(1), b(2) and c(10-14). The alpha and beta chains form an alternating ring which encloses part of the gamma chain. F(1) is attached to F(0) by a central stalk formed by the gamma and epsilon chains, while a peripheral stalk is formed by the delta and b chains.

It localises to the cell inner membrane. Functionally, f(1)F(0) ATP synthase produces ATP from ADP in the presence of a proton or sodium gradient. F-type ATPases consist of two structural domains, F(1) containing the extramembraneous catalytic core and F(0) containing the membrane proton channel, linked together by a central stalk and a peripheral stalk. During catalysis, ATP synthesis in the catalytic domain of F(1) is coupled via a rotary mechanism of the central stalk subunits to proton translocation. Key component of the F(0) channel; it plays a direct role in translocation across the membrane. A homomeric c-ring of between 10-14 subunits forms the central stalk rotor element with the F(1) delta and epsilon subunits. The sequence is that of ATP synthase subunit c from Shewanella halifaxensis (strain HAW-EB4).